The chain runs to 318 residues: Taste receptor type 2 member 60 (318 aa).

The Extracellular segment spans residues 1-7 (MNGDHMV). A helical transmembrane segment spans residues 8–28 (LGSSVTDKKAIILVTILLLLR). Residues 29-40 (LVAIAGNGFIIA) are Cytoplasmic-facing. A helical transmembrane segment spans residues 41 to 61 (ALGVEWVLRRMLLPCDXLLVS). Residues 62–88 (LGASRFCLQSVVMGKTIYVFLHPMAFP) are Extracellular-facing. A helical transmembrane segment spans residues 89 to 109 (YNPVLQFLAFQWDFLNAATLW). The Cytoplasmic segment spans residues 110 to 128 (FSTWLSVFYCVKIAAFTHP). The helical transmembrane segment at 129 to 149 (VFLWLKHKLSGWLPWILFSSV) threads the bilayer. Topologically, residues 150 to 183 (GLSSFTTILFFIGNHRMYQNYLRNHLQPWNITGN) are extracellular. Asn179 carries N-linked (GlcNAc...) asparagine glycosylation. Residues 184 to 204 (SIRSYCEKFYLFPLKMITWTM) traverse the membrane as a helical segment. Over 205–234 (PTAVFFICMILLITSLGRHMKKALLTTSGF) the chain is Cytoplasmic. The chain crosses the membrane as a helical span at residues 235–255 (REPSMQAHIKALLALLSFAML). Over 256-264 (FISYFLSLV) the chain is Extracellular. Residues 265–285 (FSAAGIFPPLDFKFWVWESVI) form a helical membrane-spanning segment. Residues 286–318 (YLCAAVHPIILLFSNCRLRAVLKSCRSSRCGTP) lie on the Cytoplasmic side of the membrane.

Belongs to the G-protein coupled receptor T2R family.

It is found in the membrane. Its function is as follows. Receptor that may play a role in the perception of bitterness and is gustducin-linked. May play a role in sensing the chemical composition of the gastrointestinal content. The activity of this receptor may stimulate alpha gustducin, mediate PLC-beta-2 activation and lead to the gating of TRPM5. The protein is Taste receptor type 2 member 60 (TAS2R60) of Gorilla gorilla gorilla (Western lowland gorilla).